Here is a 315-residue protein sequence, read N- to C-terminus: Probable cell division protein WhiA (315 aa).

The H-T-H motif DNA-binding region spans 280-313 (SLKELGEMLDPPVGKSGINHRLRKIEKIAEELRT).

It belongs to the WhiA family.

In terms of biological role, involved in cell division and chromosome segregation. The chain is Probable cell division protein WhiA from Clostridium beijerinckii (strain ATCC 51743 / NCIMB 8052) (Clostridium acetobutylicum).